Here is a 206-residue protein sequence, read N- to C-terminus: Large ribosomal subunit protein uL4 (206 aa).

The tract at residues 63–97 (MYKQKGTGRARHHSARAPQFRGGGKAHGPVVRSHE) is disordered. Basic residues predominate over residues 64-77 (YKQKGTGRARHHSA).

It belongs to the universal ribosomal protein uL4 family. Part of the 50S ribosomal subunit.

One of the primary rRNA binding proteins, this protein initially binds near the 5'-end of the 23S rRNA. It is important during the early stages of 50S assembly. It makes multiple contacts with different domains of the 23S rRNA in the assembled 50S subunit and ribosome. Functionally, forms part of the polypeptide exit tunnel. The polypeptide is Large ribosomal subunit protein uL4 (Rhizobium johnstonii (strain DSM 114642 / LMG 32736 / 3841) (Rhizobium leguminosarum bv. viciae)).